The chain runs to 274 residues: Undecaprenyl-diphosphatase 1 (274 aa).

The next 8 membrane-spanning stretches (helical) occupy residues 4-24, 45-65, 84-104, 111-131, 146-166, 186-206, 217-237, and 249-269; these read LLLL…FLPI, SAVF…YEYW, HLAI…LSFG, LFND…IMWI, IGLK…IPGT, ATEF…LLDL, FDWS…LLLI, and FMVF…FAYT.

Belongs to the UppP family.

The protein localises to the cell inner membrane. It carries out the reaction di-trans,octa-cis-undecaprenyl diphosphate + H2O = di-trans,octa-cis-undecaprenyl phosphate + phosphate + H(+). Catalyzes the dephosphorylation of undecaprenyl diphosphate (UPP). Confers resistance to bacitracin. The sequence is that of Undecaprenyl-diphosphatase 1 from Acinetobacter baylyi (strain ATCC 33305 / BD413 / ADP1).